Here is a 283-residue protein sequence, read N- to C-terminus: Flagellar filament 35 kDa core protein (283 aa).

It belongs to the bacterial flagellin family. As to quaternary structure, the flagellum consists of two outer layers around a core that contains several antigenically related polypeptides.

Its subcellular location is the periplasmic flagellum. It is found in the periplasm. Its function is as follows. Component of the core of the flagella. This chain is Flagellar filament 35 kDa core protein (flaB), found in Leptospira interrogans serogroup Icterohaemorrhagiae serovar Lai (strain 56601).